We begin with the raw amino-acid sequence, 655 residues long: Archaeal Lon protease (655 aa).

Over 1–123 the chain is Cytoplasmic; it reads MEENIESVEE…KAEREKRDRS (123 aa). 57–64 contributes to the ATP binding site; the sequence is GEPGTGKS. The chain crosses the membrane as a helical span at residues 124–144; it reads RSIMFVIFSVVLLGIIAAIVL. Arg-145 is a topological domain (extracellular). The helical transmembrane segment at 146-166 threads the bilayer; it reads SITLIFFAIMAAAFLYMAMAF. Residues 167 to 655 are Cytoplasmic-facing; sequence NPVIRNEKAM…ASTRAGQNVA (489 aa). Positions 433–618 constitute a Lon proteolytic domain; the sequence is GSVVGMVNGL…EDVLKVALVN (186 aa). Catalysis depends on residues Ser-525 and Lys-568.

This sequence belongs to the peptidase S16 family. Archaeal LonB subfamily. As to quaternary structure, homohexamer. Organized in a ring with a central cavity.

It localises to the cell membrane. Its function is as follows. ATP-dependent serine protease that mediates the selective degradation of mutant and abnormal proteins as well as certain short-lived regulatory proteins. Degrades polypeptides processively. The polypeptide is Archaeal Lon protease (Thermoplasma volcanium (strain ATCC 51530 / DSM 4299 / JCM 9571 / NBRC 15438 / GSS1)).